Consider the following 565-residue polypeptide: Proline--tRNA ligase (565 aa).

Belongs to the class-II aminoacyl-tRNA synthetase family. ProS type 1 subfamily. In terms of assembly, homodimer.

It localises to the cytoplasm. It carries out the reaction tRNA(Pro) + L-proline + ATP = L-prolyl-tRNA(Pro) + AMP + diphosphate. Its function is as follows. Catalyzes the attachment of proline to tRNA(Pro) in a two-step reaction: proline is first activated by ATP to form Pro-AMP and then transferred to the acceptor end of tRNA(Pro). As ProRS can inadvertently accommodate and process non-cognate amino acids such as alanine and cysteine, to avoid such errors it has two additional distinct editing activities against alanine. One activity is designated as 'pretransfer' editing and involves the tRNA(Pro)-independent hydrolysis of activated Ala-AMP. The other activity is designated 'posttransfer' editing and involves deacylation of mischarged Ala-tRNA(Pro). The misacylated Cys-tRNA(Pro) is not edited by ProRS. The polypeptide is Proline--tRNA ligase (Francisella tularensis subsp. mediasiatica (strain FSC147)).